Here is a 476-residue protein sequence, read N- to C-terminus: Glycogen synthase (476 aa).

Residue K15 coordinates ADP-alpha-D-glucose.

Belongs to the glycosyltransferase 1 family. Bacterial/plant glycogen synthase subfamily.

The catalysed reaction is [(1-&gt;4)-alpha-D-glucosyl](n) + ADP-alpha-D-glucose = [(1-&gt;4)-alpha-D-glucosyl](n+1) + ADP + H(+). It participates in glycan biosynthesis; glycogen biosynthesis. Synthesizes alpha-1,4-glucan chains using ADP-glucose. This is Glycogen synthase from Haemophilus influenzae (strain 86-028NP).